The chain runs to 452 residues: Phosphoglucosamine mutase (452 aa).

Serine 103 (phosphoserine intermediate) is an active-site residue. Serine 103, aspartate 243, aspartate 245, and aspartate 247 together coordinate Mg(2+). Serine 103 bears the Phosphoserine mark.

This sequence belongs to the phosphohexose mutase family. Requires Mg(2+) as cofactor. Activated by phosphorylation.

It carries out the reaction alpha-D-glucosamine 1-phosphate = D-glucosamine 6-phosphate. Functionally, catalyzes the conversion of glucosamine-6-phosphate to glucosamine-1-phosphate. The polypeptide is Phosphoglucosamine mutase (Lactobacillus acidophilus (strain ATCC 700396 / NCK56 / N2 / NCFM)).